Here is a 511-residue protein sequence, read N- to C-terminus: Maturase K (511 aa).

The protein belongs to the intron maturase 2 family. MatK subfamily.

It is found in the plastid. It localises to the chloroplast. In terms of biological role, usually encoded in the trnK tRNA gene intron. Probably assists in splicing its own and other chloroplast group II introns. The protein is Maturase K of Melica altissima (Siberian melic grass).